Reading from the N-terminus, the 95-residue chain is Large ribosomal subunit protein bL27 (95 aa).

The propeptide occupies 1-6 (MKLQLF). The disordered stretch occupies residues 1 to 25 (MKLQLFAHKKGVGSSRNGRDSESKR).

It belongs to the bacterial ribosomal protein bL27 family. In terms of processing, the N-terminus is cleaved by ribosomal processing cysteine protease Prp.

This chain is Large ribosomal subunit protein bL27, found in Thermoanaerobacter pseudethanolicus (strain ATCC 33223 / 39E) (Clostridium thermohydrosulfuricum).